Reading from the N-terminus, the 530-residue chain is ATP-dependent RNA helicase DBP3 (530 aa).

Residues 1 to 20 (MSKDEIKDKKRKSEEYEVVD) are compositionally biased toward basic and acidic residues. The interval 1-77 (MSKDEIKDKK…VASVSTSSTV (77 aa)) is disordered. Residues 19–58 (VDKKKHKKDKKDKKEKKDKKEKKLKKDKKDKKDKKETKSE) adopt a coiled-coil conformation. Residues 21–50 (KKKHKKDKKDKKEKKDKKEKKLKKDKKDKK) are compositionally biased toward basic residues. Positions 67–77 (SVASVSTSSTV) are enriched in low complexity. The short motif at 117–143 (LSFSHISLDSRIQAEISKFPKPTPIQA) is the Q motif element. A Helicase ATP-binding domain is found at 146–322 (WPYLLAGKDV…STFMNSPIKV (177 aa)). 159–166 (AETGSGKT) lines the ATP pocket. Residues 269–272 (DEAD) carry the DEAD box motif. The 150-residue stretch at 351-500 (KLLELLKKYQ…PVPEELKKFG (150 aa)) folds into the Helicase C-terminal domain.

Belongs to the DEAD box helicase family. DDX5/DBP2 subfamily.

Its subcellular location is the nucleus. It is found in the nucleolus. It carries out the reaction ATP + H2O = ADP + phosphate + H(+). Functionally, ATP-dependent RNA helicase required for 60S ribosomal subunit synthesis. Involved in efficient pre-rRNA processing, predominantly at site A3, which is necessary for the normal formation of 25S and 5.8S rRNAs. The polypeptide is ATP-dependent RNA helicase DBP3 (DBP3) (Vanderwaltozyma polyspora (strain ATCC 22028 / DSM 70294 / BCRC 21397 / CBS 2163 / NBRC 10782 / NRRL Y-8283 / UCD 57-17) (Kluyveromyces polysporus)).